Reading from the N-terminus, the 518-residue chain is uncharacterized protein (518 aa).

This sequence belongs to the MG032/MG096/MG288 family.

This is an uncharacterized protein from Mycoplasma pneumoniae (strain ATCC 29342 / M129 / Subtype 1) (Mycoplasmoides pneumoniae).